A 492-amino-acid chain; its full sequence is 5-taurinomethyluridine-[tRNA] synthase subunit GTPB3, mitochondrial (492 aa).

A mitochondrion-targeting transit peptide spans 1-20 (MWRGLSALVTQAAWAPLRLC). 5,10-methylenetetrahydrofolate contacts are provided by Arg-52, Glu-112, and Lys-152. In terms of domain architecture, TrmE-type G spans 249 to 416 (GANVVVTGPP…LLQALKTELA (168 aa)). GTP-binding positions include 256–263 (GPPNAGKS), 282–286 (GTTRD), 303–306 (DTAG), and 374–377 (NKSD). Asn-259 provides a ligand contact to K(+). Mg(2+) contacts are provided by Ser-263 and Thr-284. 5,10-methylenetetrahydrofolate is bound at residue Lys-492.

It belongs to the TRAFAC class TrmE-Era-EngA-EngB-Septin-like GTPase superfamily. TrmE GTPase family. Homodimer; forms a dimer in the presence of potassium. Interacts with MTO1; forms the GTPBP3-MTO1 complex composed of homodimers of GTPBP3 and MTO1. Requires K(+) as cofactor. As to expression, ubiquitously expressed. Highly expressed in tissues with high metabolic rates including heart, liver and brain. Weakly expressed in skeletal muscle.

It is found in the mitochondrion. It catalyses the reaction GTP + H2O = GDP + phosphate + H(+). Functionally, GTPase component of the GTPBP3-MTO1 complex that catalyzes the 5-taurinomethyluridine (taum(5)U) modification at the 34th wobble position (U34) of mitochondrial tRNAs (mt-tRNAs), which plays a role in mt-tRNA decoding and mitochondrial translation. Taum(5)U formation on mammalian mt-tRNA requires the presence of both GTPBP3-mediated GTPase activity and MTO1 catalytic activity. In Mus musculus (Mouse), this protein is 5-taurinomethyluridine-[tRNA] synthase subunit GTPB3, mitochondrial.